The primary structure comprises 296 residues: MSDAVTKTVAPLRRKANPINGKHTNGVTIDGIFDDHNRQIGPINSQMEDIAQKTDDGGGGEWTSKASFMTWTMHDIIYVARHHWIPCLFAAGVMFFTVVEYTFQMTPASSQPFDLGFVATRYLHSILASSPNLNTVLAALNTILVGMQTTYIGCTWAVEGRPRATIAALFMFTCRGILGYSTQLPRPQEFLGSGVDYPVGNVSFFLFYSGHVAGSMIASLDMKRMQRFRLAMVFDILNVLQSIRLLGTRGHYTIDIAVGVGAGILFDSLAGKYEEMSKRHLRNTRCSLISKDSLVT.

The next 5 helical transmembrane spans lie at 83-103, 136-156, 165-182, 198-218, and 250-270; these read HWIP…EYTF, VLAA…GCTW, TIAA…GYST, PVGN…SMIA, and GHYT…DSLA. Active-site residues include H211, H251, and D255.

It belongs to the phosphatidylcholine:diacylglycerol cholinephosphotransferase family.

It is found in the membrane. Its function is as follows. Functions as a phosphatidylcholine:diacylglycerol cholinephosphotransferase that catalyzes the transfer of the phosphocholine headgroup from phosphatidylcholine (PC) to diacylglycerol, a major reaction for the transfer of 18:1 into phosphatidylcholine for desaturation and also for the reverse transfer of 18:2 and 18:3 into the triacylglycerols synthesis pathway. This is Phosphatidylcholine:diacylglycerol cholinephosphotransferase 2 from Arabidopsis thaliana (Mouse-ear cress).